The following is a 242-amino-acid chain: N-alpha-acetyltransferase 60 (242 aa).

Over 1 to 192 (MTDVVPTTAL…GGHPPWTIFD (192 aa)) the chain is Cytoplasmic. Residues 13 to 182 (IQLRLLCHDD…DGFTYVLYIN (170 aa)) enclose the N-acetyltransferase domain. Residue Tyr-38 coordinates substrate. Residue Tyr-97 is part of the active site. Substrate is bound at residue Leu-99. Residues 101-103 (LGV) and 109-114 (KHGIGS) each bind acetyl-CoA. The active site involves His-138. Residues Asn-143 and 150-153 (YENR) each bind acetyl-CoA. Positions 162–173 (PYYYSIRGVLKD) are required for homodimerization. Position 165 (Tyr-165) interacts with substrate. Positions 193 to 236 (YIHHIGSALASLSPCSIPQRIYRQAQNLLRSFLPWSGISSKSGI) form an intramembrane region, helical. Over 237-242 (EYSRTM) the chain is Cytoplasmic.

The protein belongs to the acetyltransferase family. NAA60 subfamily. As to quaternary structure, monomer and homodimer; monomer in presence of substrate and homodimer in its absence.

The protein localises to the golgi apparatus membrane. It carries out the reaction N-terminal L-methionyl-[transmembrane protein] + acetyl-CoA = N-terminal N(alpha)-acetyl-L-methionyl-[transmembrane protein] + CoA + H(+). The enzyme catalyses L-lysyl-[protein] + acetyl-CoA = N(6)-acetyl-L-lysyl-[protein] + CoA + H(+). Functionally, N-alpha-acetyltransferase that specifically mediates the acetylation of N-terminal residues of the transmembrane proteins, with a strong preference for N-termini facing the cytosol. Displays N-terminal acetyltransferase activity towards a range of N-terminal sequences including those starting with Met-Lys, Met-Val, Met-Ala and Met-Met. Required for normal chromosomal segregation during anaphase. May also show histone acetyltransferase activity; such results are however unclear in vivo and would require additional experimental evidences. The sequence is that of N-alpha-acetyltransferase 60 (naa60) from Danio rerio (Zebrafish).